A 100-amino-acid polypeptide reads, in one-letter code: Small ribosomal subunit protein uS14c (100 aa).

This sequence belongs to the universal ribosomal protein uS14 family. As to quaternary structure, part of the 30S ribosomal subunit.

It is found in the plastid. It localises to the chloroplast. Binds 16S rRNA, required for the assembly of 30S particles. In Pisum sativum (Garden pea), this protein is Small ribosomal subunit protein uS14c.